The following is a 287-amino-acid chain: 4,4'-diapophytoene synthase (287 aa).

(2E,6E)-farnesyl diphosphate contacts are provided by residues 18 to 21 (HSKS), Y41, and R45. 2 residues coordinate Mg(2+): D48 and D52. Q165 lines the (2E,6E)-farnesyl diphosphate pocket. Residue N168 coordinates Mg(2+). R171 provides a ligand contact to (2E,6E)-farnesyl diphosphate. D172 provides a ligand contact to Mg(2+). Y248 serves as a coordination point for (2E,6E)-farnesyl diphosphate.

This sequence belongs to the phytoene/squalene synthase family. CrtM subfamily. Mg(2+) is required as a cofactor.

The enzyme catalyses 2 (2E,6E)-farnesyl diphosphate = 15-cis-4,4'-diapophytoene + 2 diphosphate. It participates in carotenoid biosynthesis; staphyloxanthin biosynthesis; staphyloxanthin from farnesyl diphosphate: step 1/5. Functionally, involved in the biosynthesis of the yellow-orange carotenoid staphyloxanthin, which plays a role in the virulence via its protective function against oxidative stress. Catalyzes the head-to-head condensation of two molecules of farnesyl diphosphate (FPP) into the colorless C(30) carotenoid 4,4'-diapophytoene (dehydrosqualene). The sequence is that of 4,4'-diapophytoene synthase from Staphylococcus aureus (strain NCTC 8325 / PS 47).